The primary structure comprises 130 residues: Large ribosomal subunit protein bL19 (130 aa).

Belongs to the bacterial ribosomal protein bL19 family.

This protein is located at the 30S-50S ribosomal subunit interface and may play a role in the structure and function of the aminoacyl-tRNA binding site. This Psychrobacter arcticus (strain DSM 17307 / VKM B-2377 / 273-4) protein is Large ribosomal subunit protein bL19.